The following is an 80-amino-acid chain: Toxin TdNa1 (80 aa).

The first 20 residues, 1–20 (MKGIILFISCLMLIDVVVES), serve as a signal peptide directing secretion. The region spanning 21–79 (RDAYPADWRGCKFSCFWGSSSWCNEECTSLGGSSGYCAWPACWCYGLPDSVRYYNNKCH) is the LCN-type CS-alpha/beta domain. Cystine bridges form between Cys-31–Cys-78, Cys-35–Cys-57, Cys-43–Cys-62, and Cys-47–Cys-64.

Belongs to the long (4 C-C) scorpion toxin superfamily. Sodium channel inhibitor family. Beta subfamily. As to expression, expressed by the venom gland.

It localises to the secreted. Functionally, inhibits the sodium (Nav) currents in an apparent irreversible manner. Produces small depolarization and induces repetitive firing in squid axons. Is specific for arthropods (crickets, triatomides, crabs and squids), but is non-toxic to mice. The chain is Toxin TdNa1 from Tityus discrepans (Venezuelan scorpion).